The primary structure comprises 476 residues: Aspartyl/glutamyl-tRNA(Asn/Gln) amidotransferase subunit B (476 aa).

Belongs to the GatB/GatE family. GatB subfamily. In terms of assembly, heterotrimer of A, B and C subunits.

The catalysed reaction is L-glutamyl-tRNA(Gln) + L-glutamine + ATP + H2O = L-glutaminyl-tRNA(Gln) + L-glutamate + ADP + phosphate + H(+). It catalyses the reaction L-aspartyl-tRNA(Asn) + L-glutamine + ATP + H2O = L-asparaginyl-tRNA(Asn) + L-glutamate + ADP + phosphate + 2 H(+). Allows the formation of correctly charged Asn-tRNA(Asn) or Gln-tRNA(Gln) through the transamidation of misacylated Asp-tRNA(Asn) or Glu-tRNA(Gln) in organisms which lack either or both of asparaginyl-tRNA or glutaminyl-tRNA synthetases. The reaction takes place in the presence of glutamine and ATP through an activated phospho-Asp-tRNA(Asn) or phospho-Glu-tRNA(Gln). The chain is Aspartyl/glutamyl-tRNA(Asn/Gln) amidotransferase subunit B from Neisseria meningitidis serogroup B (strain ATCC BAA-335 / MC58).